A 104-amino-acid chain; its full sequence is uncharacterized protein (104 aa).

Disordered regions lie at residues 1–20 (MTET…TTRK) and 83–104 (TASA…VAKK). Residues 83–93 (TASASSSGKKV) show a composition bias toward low complexity. Residues 94–104 (VASKKKVVAKK) show a composition bias toward basic residues.

This is an uncharacterized protein from Dictyostelium discoideum (Social amoeba).